The primary structure comprises 413 residues: L-arginine-specific L-amino acid ligase (413 aa).

The ATP-grasp domain occupies 115–312 (KTKLKMEGIP…LWESSLNISV (198 aa)). Position 141–202 (141–202 (GEKLGWPIIV…EKCIEMEEFH (62 aa))) interacts with ATP. Residues E268 and E281 each contribute to the Mg(2+) site. 2 residues coordinate Mn(2+): E268 and E281.

In terms of assembly, homodimer. Requires Mg(2+) as cofactor. Mn(2+) is required as a cofactor. It depends on Co(2+) as a cofactor.

It catalyses the reaction an L-alpha-amino acid + L-arginine + ATP = L-arginyl-L-alpha-amino acid + ADP + phosphate + H(+). In terms of biological role, catalyzes the synthesis of Arg-Xaa dipeptides in an ATP-dependent manner. Has strict specificity toward arginine as the N-terminal substrate. This Bacillus subtilis protein is L-arginine-specific L-amino acid ligase.